We begin with the raw amino-acid sequence, 458 residues long: tRNA modification GTPase MnmE (458 aa).

(6S)-5-formyl-5,6,7,8-tetrahydrofolate contacts are provided by Arg22, Glu84, and Arg123. The region spanning 220-379 is the TrmE-type G domain; it reads GIATAIIGRP…LEKAIADLFF (160 aa). Asn230 is a binding site for K(+). Residues 230–235, 249–255, and 274–277 each bind GTP; these read NVGKSS, TDIAGTT, and DTAG. A Mg(2+)-binding site is contributed by Ser234. Positions 249, 251, and 254 each coordinate K(+). Thr255 serves as a coordination point for Mg(2+). Lys458 is a binding site for (6S)-5-formyl-5,6,7,8-tetrahydrofolate.

It belongs to the TRAFAC class TrmE-Era-EngA-EngB-Septin-like GTPase superfamily. TrmE GTPase family. Homodimer. Heterotetramer of two MnmE and two MnmG subunits. Requires K(+) as cofactor.

The protein localises to the cytoplasm. Exhibits a very high intrinsic GTPase hydrolysis rate. Involved in the addition of a carboxymethylaminomethyl (cmnm) group at the wobble position (U34) of certain tRNAs, forming tRNA-cmnm(5)s(2)U34. This is tRNA modification GTPase MnmE from Bacillus anthracis.